We begin with the raw amino-acid sequence, 47 residues long: Putative heat shock protein HSP90 (47 aa).

ATP is bound at residue arginine 47.

Belongs to the heat shock protein 90 family. Homodimer.

It localises to the cytoplasm. Putative molecular chaperone that may promote the maturation, structural maintenance and proper regulation of specific target proteins. The polypeptide is Putative heat shock protein HSP90 (Populus euphratica (Euphrates poplar)).